A 424-amino-acid chain; its full sequence is Inhibin beta A chain (424 aa).

The signal sequence occupies residues M1–S20. The propeptide occupies S21–R308. An N-linked (GlcNAc...) asparagine glycan is attached at N165. Residues K257–R288 form a disordered region. Over residues K261–G273 the composition is skewed to basic and acidic residues. 4 disulfide bridges follow: C312–C320, C319–C389, C348–C421, and C352–C423.

Belongs to the TGF-beta family. Dimeric, linked by one or more disulfide bonds. Inhibin A is a dimer of alpha/INHA and beta-A/INHBA. Activin A is a homodimer of beta-A/INHBA. Activin AB is a dimer of beta-A/INHBA and beta-B/INHBB. Interacts with FST and FSTL3; these interactions prevent activin A interaction to its type II receptor. Activin A interacts with ACVR2A. Activin A interacts with BMPR2. Inhibin A interacts with ACVR1; this interaction creates a non-signaling complex (NSC) that inhibits ACVR1-mediated BMP signaling. Inhibin A interacts with ACVR2A.

It is found in the secreted. Inhibins/activins are involved in regulating a number of diverse functions such as hypothalamic and pituitary hormone secretion, gonadal hormone secretion, germ cell development and maturation, erythroid differentiation, insulin secretion, nerve cell survival, embryonic axial development or bone growth, depending on their subunit composition. Its function is as follows. Activin A is a homodimer of INHBA that plays a role in several essential biological processes including embryonic development, stem cell maintenance and differentiation, haematopoiesis, cell proliferation and tissue fibrosis. Signals through type I (such as ACVR1B or ACVR1C) and type II receptors (such as ACVR2A, ACVR2B or BMPR2) which, upon ligand binding, phosphorylate SMAD2 and SMAD3 intracellular signaling mediators that form a complex with SMAD4, translocate to the nucleus and modulate gene expression. Can also activate alternative non-canonical intracellular signaling pathways including the p38 MAPK, extracellular signal-regulated kinases 1/2 (ERK1/2) and c-Jun N-terminal kinases (JNKs) to modulate cell migration and differentiation. Alternatively, promotes osteoblastic differentiation via ACVRL1-SMAD1/5/9 pathway. In addition, can engage the type I receptor ACVR1 to form an ACVR1-activin A-type II receptor non-signaling complex (NSC) that renders receptors unavailable for engagement with BMPs, hence resulting in an apparent inhibition of ACVR1-mediated BMP signaling. Functionally, inhibin A is a dimer of alpha/INHA and beta-A/INHBA that functions as a feedback regulator in the hypothalamic-pituitary-gonadal (HPG) axis. Inhibits the secretion of FSH from the anterior pituitary gland by acting on pituitary gonadotrope cells. Antagonizes activin A by binding to the proteoglycan, betaglycan, and forming a stable complex with and, thereby, sequestering type II activin receptors while excluding type I receptor. The polypeptide is Inhibin beta A chain (INHBA) (Felis catus (Cat)).